A 282-amino-acid polypeptide reads, in one-letter code: MVLQENGYGVEEDIPTLLMAASSMDDLLAITGFNTCLSIVFYSGGMINNAIASLRNVCISLLAGIVLGFFVRYFPSEDQKKITLKRGFLVLITFVSAVLGSQPIGLHGSGGLCTLVLHFIEWTKWSQEKMKVQKIITNVWDIFQPLLFGLVGAEVSVSLLESNIVGISVSTLSLALCVRILNIYLLMCFAGFSFKEKIFIALAWMPKATVQAVLGPLALETARVSTPHLETYAKDVMTVAFLAIMITAPNGALLMGILGPKMLTRHYDPSKIKLQLSTLEHH.

Helical transmembrane passes span 27–47 (LLAITGFNTCLSIVFYSGGMI), 51–71 (IASLRNVCISLLAGIVLGFFV), 87–107 (GFLVLITFVSAVLGSQPIGLH), 135–155 (IITNVWDIFQPLLFGLVGAEV), 174–194 (LALCVRILNIYLLMCFAGFSF), 198–218 (IFIALAWMPKATVQAVLGPLA), and 239–259 (VAFLAIMITAPNGALLMGILG).

Belongs to the monovalent cation:proton antiporter 1 (CPA1) transporter (TC 2.A.36) family.

The protein resides in the membrane. The polypeptide is Putative SLC9B1-like protein SLC9B1P1 (SLC9B1P1) (Homo sapiens (Human)).